We begin with the raw amino-acid sequence, 401 residues long: Argininosuccinate synthase (401 aa).

10–18 is a binding site for ATP; it reads AYSGGVDTS. Tyr-89 lines the L-citrulline pocket. An ATP-binding site is contributed by Gly-119. Thr-121, Asn-125, and Asp-126 together coordinate L-aspartate. Residue Asn-125 participates in L-citrulline binding. Residues Arg-129, Ser-177, Ser-186, Glu-262, and Tyr-274 each contribute to the L-citrulline site.

Belongs to the argininosuccinate synthase family. Type 1 subfamily. In terms of assembly, homotetramer.

It localises to the cytoplasm. It catalyses the reaction L-citrulline + L-aspartate + ATP = 2-(N(omega)-L-arginino)succinate + AMP + diphosphate + H(+). It functions in the pathway amino-acid biosynthesis; L-arginine biosynthesis; L-arginine from L-ornithine and carbamoyl phosphate: step 2/3. This is Argininosuccinate synthase from Thermosynechococcus vestitus (strain NIES-2133 / IAM M-273 / BP-1).